A 292-amino-acid chain; its full sequence is E3 ubiquitin-protein ligase RNF144A (292 aa).

Residues 16–236 are TRIAD supradomain; that stretch reads PLVSCKLCLG…YDKGPCRNKL (221 aa). Residues Cys20, Cys23, Cys43, Cys46, Cys111, Cys116, Cys135, Cys138, Cys143, Cys146, His151, Cys156, Cys185, and Cys188 each contribute to the Zn(2+) site. The RING-type 1 zinc-finger motif lies at 20-70; the sequence is CKLCLGEYPVEQMTTIAQCQCIFCTLCLKQYVELLIKEGLETAISCPDAAC. The IBR-type zinc-finger motif lies at 91–156; it reads QRYKKLQFER…KASWHPGQGC (66 aa). The segment at 185 to 214 adopts an RING-type 2; atypical zinc-finger fold; that stretch reads CPKCKVYIERDEGCAQMMCKNCKHAFCWYC. Cys198 is a catalytic residue. Residues Cys203, Cys206, Cys211, Cys214, His226, and Cys232 each contribute to the Zn(2+) site. Residues 250–270 traverse the membrane as a helical segment; that stretch reads VVGIFAGFGLLLLVASPFLLL.

Belongs to the RBR family. RNF144 subfamily. As to quaternary structure, self-associates. Interacts with UBE2L3. Post-translationally, auto-ubiquitinated.

It localises to the cell membrane. The protein resides in the cytoplasmic vesicle membrane. It is found in the endosome membrane. Its subcellular location is the endoplasmic reticulum membrane. The enzyme catalyses [E2 ubiquitin-conjugating enzyme]-S-ubiquitinyl-L-cysteine + [acceptor protein]-L-lysine = [E2 ubiquitin-conjugating enzyme]-L-cysteine + [acceptor protein]-N(6)-ubiquitinyl-L-lysine.. It participates in protein modification; protein ubiquitination. Functionally, E3 ubiquitin-protein ligase which accepts ubiquitin from E2 ubiquitin-conjugating enzymes UBE2L3 and UBE2L6 in the form of a thioester and then directly transfers the ubiquitin to targeted substrates. Mediates the ubiquitination and degradation of the DNA damage kinase PRKDC during DNA damage. Positively regulates DNA virus or exogenous cytosolic DNA-triggered innate immune response by mediating STING1 ubiquitination and increasing its 'Lys-6'-linked ubiquitination and translocation from the endoplasmic reticulum to the Golgi leading to downstream signaling pathways. Plays a positive role in EGF-dependent cell proliferation by prolonging EGF/EGFR signaling during EGF stimulation through EGFR ubiquitination. Increases ERK activity independently of EGFR signaling by promoting polyubiquitination and subsequent degradation of VRK3 in the cytosol. In Homo sapiens (Human), this protein is E3 ubiquitin-protein ligase RNF144A (RNF144A).